A 1168-amino-acid polypeptide reads, in one-letter code: DNA-directed RNA polymerase subunit beta (1168 aa).

Belongs to the RNA polymerase beta chain family. As to quaternary structure, the RNAP catalytic core consists of 2 alpha, 1 beta, 1 beta' and 1 omega subunit. When a sigma factor is associated with the core the holoenzyme is formed, which can initiate transcription.

The enzyme catalyses RNA(n) + a ribonucleoside 5'-triphosphate = RNA(n+1) + diphosphate. DNA-dependent RNA polymerase catalyzes the transcription of DNA into RNA using the four ribonucleoside triphosphates as substrates. In Rhodococcus opacus (strain B4), this protein is DNA-directed RNA polymerase subunit beta.